We begin with the raw amino-acid sequence, 220 residues long: Large ribosomal subunit protein uL3 (220 aa).

Positions 127 to 155 (FQGAIKRHGQSRGPMSHSSHFHRAPDSVG) are disordered.

Belongs to the universal ribosomal protein uL3 family. Part of the 50S ribosomal subunit. Forms a cluster with proteins L14 and L19.

One of the primary rRNA binding proteins, it binds directly near the 3'-end of the 23S rRNA, where it nucleates assembly of the 50S subunit. The polypeptide is Large ribosomal subunit protein uL3 (Staphylococcus aureus (strain JH9)).